Consider the following 315-residue polypeptide: Cytochrome f (315 aa).

The N-terminal stretch at 1–30 is a signal peptide; the sequence is MRTFLKFSTLVSKGVLVLVCSFFLTASSNA. Heme contacts are provided by Y31, C51, C54, and H55. The helical transmembrane segment at 281–300 threads the bilayer; that stretch reads IQGLLVFFLFVLLAQVFLVL.

Belongs to the cytochrome f family. As to quaternary structure, the 4 large subunits of the cytochrome b6-f complex are cytochrome b6, subunit IV (17 kDa polypeptide, petD), cytochrome f and the Rieske protein, while the 4 small subunits are PetG, PetL, PetM and PetN. The complex functions as a dimer. The cofactor is heme.

It localises to the plastid. The protein localises to the chloroplast thylakoid membrane. Component of the cytochrome b6-f complex, which mediates electron transfer between photosystem II (PSII) and photosystem I (PSI), cyclic electron flow around PSI, and state transitions. In Chlorella vulgaris (Green alga), this protein is Cytochrome f (petA).